Here is a 533-residue protein sequence, read N- to C-terminus: Flavin-containing monooxygenase 5 (533 aa).

Arginine 5 is modified (dimethylated arginine). FAD is bound by residues 10–14, glutamate 33, and 41–42; these read GGGVS and LW. Serine 54 carries the phosphoserine modification. At tyrosine 56 the chain carries Phosphotyrosine. Residue serine 58 is modified to Phosphoserine. An FAD-binding site is contributed by 62 to 63; sequence NT. NADP(+) is bound at residue 196–199; the sequence is SGGD. Serine 280 bears the Phosphoserine mark. Position 284 is a phosphothreonine (threonine 284). Position 401 is a phosphoserine (serine 401). Residues 510-530 form a helical membrane-spanning segment; it reads MVSAVTTGCFMLAVVFFAIIM.

The protein belongs to the FMO family. The cofactor is FAD. Expressed in liver.

The protein resides in the microsome membrane. It localises to the endoplasmic reticulum membrane. It carries out the reaction N,N-dimethylaniline + NADPH + O2 + H(+) = N,N-dimethylaniline N-oxide + NADP(+) + H2O. The catalysed reaction is NADPH + O2 + H(+) = H2O2 + NADP(+). It catalyses the reaction heptan-2-one + NADPH + O2 + H(+) = pentyl acetate + NADP(+) + H2O. The enzyme catalyses octan-3-one + NADPH + O2 + H(+) = pentyl propanoate + NADP(+) + H2O. It carries out the reaction octan-3-one + NADPH + O2 + H(+) = ethyl hexanoate + NADP(+) + H2O. The catalysed reaction is hexan-3-one + NADPH + O2 + H(+) = ethyl butanoate + NADP(+) + H2O. It catalyses the reaction hexan-3-one + NADPH + O2 + H(+) = propyl propanoate + NADP(+) + H2O. The enzyme catalyses heptan-4-one + NADPH + O2 + H(+) = propyl butanoate + NADP(+) + H2O. It carries out the reaction (2E)-geranial + NADPH + O2 + H(+) = (1E)-2,6-dimethylhepta-1,5-dien-1-yl formate + NADP(+) + H2O. The catalysed reaction is sulcatone + NADPH + O2 + H(+) = 4-methylpent-3-en-1-yl acetate + NADP(+) + H2O. In terms of biological role, acts as a Baeyer-Villiger monooxygenase on a broad range of substrates. Catalyzes the insertion of an oxygen atom into a carbon-carbon bond adjacent to a carbonyl, which converts ketones to esters. Active on diverse carbonyl compounds, whereas soft nucleophiles are mostly non- or poorly reactive. In contrast with other forms of FMO it is non- or poorly active on 'classical' substrates such as drugs, pesticides, and dietary components containing soft nucleophilic heteroatoms. Able to oxidize drug molecules bearing a carbonyl group on an aliphatic chain, such as nabumetone and pentoxifylline. Also, in the absence of substrates, shows slow but yet significant NADPH oxidase activity. Acts as a positive modulator of cholesterol biosynthesis as well as glucose homeostasis, promoting metabolic aging via pleiotropic effects. This Cavia porcellus (Guinea pig) protein is Flavin-containing monooxygenase 5 (FMO5).